The chain runs to 345 residues: N-acetyl-gamma-glutamyl-phosphate reductase (345 aa).

Residue C149 is part of the active site.

This sequence belongs to the NAGSA dehydrogenase family. Type 1 subfamily.

It localises to the cytoplasm. The enzyme catalyses N-acetyl-L-glutamate 5-semialdehyde + phosphate + NADP(+) = N-acetyl-L-glutamyl 5-phosphate + NADPH + H(+). Its pathway is amino-acid biosynthesis; L-arginine biosynthesis; N(2)-acetyl-L-ornithine from L-glutamate: step 3/4. Its function is as follows. Catalyzes the NADPH-dependent reduction of N-acetyl-5-glutamyl phosphate to yield N-acetyl-L-glutamate 5-semialdehyde. In Halalkalibacterium halodurans (strain ATCC BAA-125 / DSM 18197 / FERM 7344 / JCM 9153 / C-125) (Bacillus halodurans), this protein is N-acetyl-gamma-glutamyl-phosphate reductase.